A 105-amino-acid polypeptide reads, in one-letter code: Heat shock protein HspQ (105 aa).

Belongs to the HspQ family.

It is found in the cytoplasm. Its function is as follows. Involved in the degradation of certain denaturated proteins, including DnaA, during heat shock stress. The chain is Heat shock protein HspQ from Klebsiella pneumoniae (strain 342).